Reading from the N-terminus, the 385-residue chain is Probable caffeine synthase MTL2 (385 aa).

8 residues coordinate S-adenosyl-L-homocysteine: Y18, C62, N67, D101, L102, S140, F141, and C157. 3 residues coordinate caffeine: Y158, H161, and W162. N179 contributes to the Mg(2+) binding site. Caffeine is bound at residue T238. Mg(2+)-binding residues include D261, F263, and N264. Y369 is a binding site for caffeine.

This sequence belongs to the methyltransferase superfamily. Type-7 methyltransferase family. Mg(2+) serves as cofactor.

It participates in alkaloid biosynthesis. In terms of biological role, may be involved in the biosynthesis of caffeine. In Coffea canephora (Robusta coffee), this protein is Probable caffeine synthase MTL2.